Consider the following 624-residue polypeptide: Kelch-like protein diablo (624 aa).

Residues 1–55 are disordered; the sequence is MGDPLLPGSTGLGSGSATAATGGSVTAGSGLGNGGTGGAERPPSPARLTHTSEKH. Low complexity predominate over residues 15-28; it reads GSATAATGGSVTAG. Residues 29–38 are compositionally biased toward gly residues; the sequence is SGLGNGGTGG. Residues 73 to 140 enclose the BTB domain; that stretch reads CDVVLNVGGR…CYTAHIIVEE (68 aa). The 103-residue stretch at 175-277 folds into the BACK domain; that stretch reads CLGIRAFADT…SPKFLVGTVG (103 aa). 6 Kelch repeats span residues 324–370, 372–418, 419–465, 467–512, 514–559, and 560–606; these read VLFA…VLND, LYAV…VLDG, FLYA…VLSG, LYAI…VFNN, IYAV…VVNG, and QLYA…VMRA.

Its pathway is protein modification; protein ubiquitination. Probable substrate-specific adapter of an E3 ubiquitin-protein ligase complex which mediates the ubiquitination and subsequent proteasomal degradation of target proteins. May have a role in synapse differentiation and growth. The protein is Kelch-like protein diablo of Drosophila grimshawi (Hawaiian fruit fly).